A 105-amino-acid chain; its full sequence is MRKIKRNDEVIVITGKDKGKRGKVNRVLSDDRLIVSGVQIIKKHQKPNPQMGIAGGIIEKEAPIQASNVAIFNPATNKADRVGFKLQEDGNKIRVFKSNGEAIDA.

It belongs to the universal ribosomal protein uL24 family. In terms of assembly, part of the 50S ribosomal subunit.

One of two assembly initiator proteins, it binds directly to the 5'-end of the 23S rRNA, where it nucleates assembly of the 50S subunit. In terms of biological role, one of the proteins that surrounds the polypeptide exit tunnel on the outside of the subunit. This chain is Large ribosomal subunit protein uL24, found in Saccharophagus degradans (strain 2-40 / ATCC 43961 / DSM 17024).